Here is a 142-residue protein sequence, read N- to C-terminus: Succinate dehydrogenase subunit 6, mitochondrial (142 aa).

In terms of assembly, component of complex II composed of eight subunits in plants: four classical SDH subunits SDH1, SDH2, SDH3 and SDH4 (a flavoprotein (FP), an iron-sulfur protein (IP), and a cytochrome b composed of a large and a small subunit.), as well as four subunits unknown in mitochondria from bacteria and heterotrophic eukaryotes.

It localises to the mitochondrion inner membrane. It participates in carbohydrate metabolism; tricarboxylic acid cycle. The polypeptide is Succinate dehydrogenase subunit 6, mitochondrial (Oryza sativa subsp. japonica (Rice)).